The chain runs to 302 residues: Protein KTI12 homolog (302 aa).

8 to 15 (GQPCSGKS) provides a ligand contact to ATP. Positions 260–273 (LRRTFVKLMGQSSL) are calmodulin-binding.

This sequence belongs to the KTI12 family. As to quaternary structure, interacts with the elongator complex. Binds to calmodulin in a calcium-dependent manner. In terms of tissue distribution, expressed in roots, hypocotyls, cotyledons, shoot apices, stems, inflorescence apices, leaves and flowers.

Its subcellular location is the cytoplasm. The protein localises to the nucleus. In terms of biological role, elongator complex-associated factor that is not a structural subunit but rather transiently contacts the complex. Regulates both meristem activity and organ growth; acts as a positive regulator of adaxial leaf patterning by modulating both cell division and differentiation. Required for an early step in synthesis of 5-carbamoylmethyl (ncm5) groups present on uridines (ncm5U) at the wobble position in tRNA. The protein is Protein KTI12 homolog of Arabidopsis thaliana (Mouse-ear cress).